The sequence spans 1394 residues: DNA-directed RNA polymerase subunit beta' (1394 aa).

4 residues coordinate Zn(2+): Cys-71, Cys-73, Cys-86, and Cys-89. Mg(2+) is bound by residues Asp-462, Asp-464, and Asp-466. Zn(2+) contacts are provided by Cys-811, Cys-885, Cys-892, and Cys-895.

Belongs to the RNA polymerase beta' chain family. In terms of assembly, the RNAP catalytic core consists of 2 alpha, 1 beta, 1 beta' and 1 omega subunit. When a sigma factor is associated with the core the holoenzyme is formed, which can initiate transcription. It depends on Mg(2+) as a cofactor. Zn(2+) is required as a cofactor.

It catalyses the reaction RNA(n) + a ribonucleoside 5'-triphosphate = RNA(n+1) + diphosphate. DNA-dependent RNA polymerase catalyzes the transcription of DNA into RNA using the four ribonucleoside triphosphates as substrates. In Xanthobacter autotrophicus (strain ATCC BAA-1158 / Py2), this protein is DNA-directed RNA polymerase subunit beta'.